Reading from the N-terminus, the 196-residue chain is Molybdenum cofactor guanylyltransferase (196 aa).

GTP is bound by residues 10-12 (LAG), lysine 23, asparagine 51, aspartate 69, and aspartate 99. Aspartate 99 is a Mg(2+) binding site.

The protein belongs to the MobA family. In terms of assembly, monomer. The cofactor is Mg(2+).

The protein localises to the cytoplasm. The enzyme catalyses Mo-molybdopterin + GTP + H(+) = Mo-molybdopterin guanine dinucleotide + diphosphate. In terms of biological role, transfers a GMP moiety from GTP to Mo-molybdopterin (Mo-MPT) cofactor (Moco or molybdenum cofactor) to form Mo-molybdopterin guanine dinucleotide (Mo-MGD) cofactor. In Shewanella baltica (strain OS185), this protein is Molybdenum cofactor guanylyltransferase.